A 63-amino-acid polypeptide reads, in one-letter code: Large ribosomal subunit protein uL30 (63 aa).

The protein belongs to the universal ribosomal protein uL30 family. As to quaternary structure, part of the 50S ribosomal subunit.

The chain is Large ribosomal subunit protein uL30 from Natranaerobius thermophilus (strain ATCC BAA-1301 / DSM 18059 / JW/NM-WN-LF).